A 244-amino-acid chain; its full sequence is Meiotic drive suppressor wtf2 (244 aa).

Residues 1–10 (MKNNYTSLKS) show a composition bias toward polar residues. The segment at 1 to 68 (MKNNYTSLKS…RENNPSRSTD (68 aa)) is disordered. The segment covering 17-30 (ELKTDHEIDLEKGP) has biased composition (basic and acidic residues). Helical transmembrane passes span 73–93 (FLIK…LAIC), 110–130 (WTLF…LTYF), 149–169 (WENM…VGSP), and 183–203 (LKWS…VFIA).

Belongs to the WTF family. In terms of assembly, homomer. Interacts with other proteins that exhibit high sequence similarity.

The protein resides in the spore membrane. It localises to the vacuole membrane. Acts as a suppressor component of the dual wtf meiotic drive system, and can suppress but not confer meiotic drive by compatible poisons. Wtf meiotic drive systems promote unequal transmission of alleles from the parental zygote to progeny spores by encoding a poison and an antidote from the same locus; the poison is trans-acting and forms toxic aggregates in all spores within an ascus, wherease the antidote is spore-specific and targets aggregates for degradation by the vacuole. Meiotic drive by wtf systems therefore lead to poisoning of all progeny that do not inherit the dual poison/antidote allele, or express a compatible antidote. The sequence is that of Meiotic drive suppressor wtf2 from Schizosaccharomyces kambucha (Fission yeast).